The following is a 419-amino-acid chain: Cell division protein FtsZ (419 aa).

Residues 22 to 26 (GGGGN), 109 to 111 (GSG), Glu140, Arg144, and Asp188 each bind GTP. The tract at residues 397-419 (ERFEAPISQDEDELDTPPFFKNR) is disordered.

It belongs to the FtsZ family. Homodimer. Polymerizes to form a dynamic ring structure in a strictly GTP-dependent manner. Interacts directly with several other division proteins. Interacts with CcrZ; the interaction is direct.

It localises to the cytoplasm. Essential cell division protein that forms a contractile ring structure (Z ring) at the future cell division site. The regulation of the ring assembly controls the timing and the location of cell division. One of the functions of the FtsZ ring is to recruit other cell division proteins to the septum to produce a new cell wall between the dividing cells. Binds GTP and shows GTPase activity. The sequence is that of Cell division protein FtsZ from Streptococcus pneumoniae serotype 2 (strain D39 / NCTC 7466).